The sequence spans 210 residues: Na(+)-translocating NADH-quinone reductase subunit D (210 aa).

The next 6 membrane-spanning stretches (helical) occupy residues 14-34 (PIVN…ALAV), 42-62 (LVMA…ISLI), 72-92 (IIVQ…LLQA), 103-123 (VFVG…AYAM), 131-151 (FMDG…VGFV), and 178-198 (NGML…IWII).

This sequence belongs to the NqrDE/RnfAE family. Composed of six subunits; NqrA, NqrB, NqrC, NqrD, NqrE and NqrF.

It is found in the cell inner membrane. The catalysed reaction is a ubiquinone + n Na(+)(in) + NADH + H(+) = a ubiquinol + n Na(+)(out) + NAD(+). Its function is as follows. NQR complex catalyzes the reduction of ubiquinone-1 to ubiquinol by two successive reactions, coupled with the transport of Na(+) ions from the cytoplasm to the periplasm. NqrA to NqrE are probably involved in the second step, the conversion of ubisemiquinone to ubiquinol. The polypeptide is Na(+)-translocating NADH-quinone reductase subunit D (Shewanella putrefaciens (strain CN-32 / ATCC BAA-453)).